Consider the following 239-residue polypeptide: Norbelladine 4'-O-methyltransferase (239 aa).

S-adenosyl-L-methionine is bound by residues valine 55, glutamate 77, 79 to 80, serine 85, aspartate 103, and alanine 132; that span reads GV. A divalent metal cation is bound at residue aspartate 155. Aspartate 157 provides a ligand contact to S-adenosyl-L-methionine. A divalent metal cation contacts are provided by aspartate 181 and asparagine 182.

This sequence belongs to the class I-like SAM-binding methyltransferase superfamily. Cation-dependent O-methyltransferase family. Requires Mg(2+) as cofactor. Mostly expressed in bulbs, and, to a lower extent, in stems and roots.

It carries out the reaction norbelladine + S-adenosyl-L-methionine = 4'-O-methylnorbelladine + S-adenosyl-L-homocysteine + H(+). Its pathway is alkaloid biosynthesis. Its function is as follows. 4'-O-methyltransferase converting norbelladine to 4'-O-methylnorbelladine. 4'-O-methylnorbelladine is a precursor to all Amaryllidaceae alkaloids such as galanthamine, lycorine and haemanthamine, and including haemanthamine- and crinamine-type alkaloids, promising anticancer agents. This chain is Norbelladine 4'-O-methyltransferase, found in Narcissus pseudonarcissus (Daffodil).